The following is a 49-amino-acid chain: Large ribosomal subunit protein bL33A (49 aa).

This sequence belongs to the bacterial ribosomal protein bL33 family.

The polypeptide is Large ribosomal subunit protein bL33A (Bacillus licheniformis (strain ATCC 14580 / DSM 13 / JCM 2505 / CCUG 7422 / NBRC 12200 / NCIMB 9375 / NCTC 10341 / NRRL NRS-1264 / Gibson 46)).